The following is a 197-amino-acid chain: Ion-translocating oxidoreductase complex subunit B (197 aa).

The segment at 1 to 26 (MSTILIAIIALAVLAAVFGAILGFAS) is hydrophobic. The 59-residue stretch at 32–90 (EADPIVDQIDTILPQTQCGQCGYPGCRPYAEAIANGDKINKCPPGGQATIEKLADLMGV) folds into the 4Fe-4S domain. [4Fe-4S] cluster contacts are provided by C49, C52, C57, C73, C114, C117, C120, C124, C144, C147, C150, and C154. 2 consecutive 4Fe-4S ferredoxin-type domains span residues 105 to 134 (TVAFIHEDMCIGCTKCIQACPVDAIVGGTK) and 135 to 164 (ALHTVIKDECTGCDLCVAPCPTDCIEMIPV).

Belongs to the 4Fe4S bacterial-type ferredoxin family. RnfB subfamily. The complex is composed of six subunits: RnfA, RnfB, RnfC, RnfD, RnfE and RnfG. [4Fe-4S] cluster is required as a cofactor.

The protein resides in the cell inner membrane. In terms of biological role, part of a membrane-bound complex that couples electron transfer with translocation of ions across the membrane. In Vibrio atlanticus (strain LGP32) (Vibrio splendidus (strain Mel32)), this protein is Ion-translocating oxidoreductase complex subunit B.